A 690-amino-acid polypeptide reads, in one-letter code: F-box/LRR-repeat protein 5 (690 aa).

The interval 1-159 (MAPFPDEVDV…IKKKVIAQHC (159 aa)) is hemerythrin-like. Fe(3+) is bound by residues His15, His57, Glu58, Glu61, His80, His126, and Glu130. In terms of domain architecture, F-box spans 202–248 (STGITHLPPEVMLSIFSYLNPQELCRCSQVSTKWSQLAKTGSLWKHL). 7 LRR repeats span residues 340 to 364 (SSAVSSKMVRQILELCPNLEHLDLT), 365 to 392 (QTDISDSAFDSWSWLGCCQSLRHLDLSG), 393 to 418 (CEKITDMALEKISRALGVLTSHQSGF), 478 to 507 (VWMLDAEDLADIEDAVEWRHRNVESLCVME), 575 to 606 (TTLPRGKDLIYFGSEKSDQETGRVLLFLSLSG), 607 to 634 (CYQITDHGLRALTLGGGLPYLEHLNLSG), and 635 to 660 (CLTVTGAGLQDLVSACPSLNDEYFYY). [2Fe-2S] cluster contacts are provided by Cys661, Cys675, Cys685, and Cys686.

In terms of assembly, part of a SCF (SKP1-cullin-F-box) protein ligase complex. Interacts with ACO1/IRP1, IREB2/IRP2; the interaction depends on the [2Fe-2S] cluster. Interacts with DCTN1/p150-glued. [2Fe-2S] cluster is required as a cofactor. Post-translationally, polybiquitinated upon iron and oxygen depletion, leading to its degradation by the proteasome. Ubiquitination is regulated by the hemerythrin-like region that acts as an oxygen and iron sensor. Undergoes constitutive ubiquitin-dependent degradation at the steady state by HERC2. Ubiquitously expressed. Highly expressed in early embryogenesis with expression decreasing as the embryo progresses through development (E11 and E15).

The protein resides in the cytoplasm. The protein localises to the perinuclear region. It localises to the nucleus. The protein operates within protein modification; protein ubiquitination. Its activity is regulated as follows. An iron-sulfur cluster promotes IRP2 polyubiquitination and degradation in response to both iron and oxygen concentrations. In terms of biological role, component of some SCF (SKP1-cullin-F-box) protein ligase complex that plays a central role in iron homeostasis by promoting the ubiquitination and subsequent degradation of IREB2/IRP2. The C-terminal domain of FBXL5 contains a redox-sensitive [2Fe-2S] cluster that, upon oxidation, promotes binding to IRP2 to effect its oxygen-dependent degradation. Under iron deficiency conditions, the N-terminal hemerythrin-like (Hr) region, which contains a diiron metal center, cannot bind iron and undergoes conformational changes that destabilize the FBXL5 protein and cause its ubiquitination and degradation. When intracellular iron levels start rising, the Hr region is stabilized. Additional increases in iron levels facilitate the assembly and incorporation of a redox active [2Fe-2S] cluster in the C-terminal domain. Only when oxygen level is high enough to maintain the cluster in its oxidized state can FBXL5 recruit IRP2 as a substrate for polyubiquination and degradation. Promotes ubiquitination and subsequent degradation of the dynactin complex component DCTN1. Within the nucleus, promotes the ubiquitination of SNAI1; preventing its interaction with DNA and promoting its degradation. Negatively regulates DNA damage response by mediating the ubiquitin-proteasome degradation of the DNA repair protein NABP2. The sequence is that of F-box/LRR-repeat protein 5 (Fbxl5) from Mus musculus (Mouse).